A 326-amino-acid polypeptide reads, in one-letter code: Vitamin B12 import system permease protein BtuC (326 aa).

Helical transmembrane passes span 15 to 35 (WLLCLSVLMLLALLLSLCAGE), 61 to 81 (LAVLLVGAALAISGAVMQALF), 88 to 108 (PGLLGVSNGAGVGLIAAVLLG), 112 to 132 (LPNWALGLCAIAGALIITLIL), 146 to 166 (LLAGVALGIICSALMTWAIYF), 184 to 204 (GGVDWRQSWLMLALIPVLLWI), 240 to 260 (GWMVGVSVALAGAIGFIGLVI), 274 to 294 (VLLPGCALAGASALLLADVVA), and 302 to 322 (ELPIGVVTATLGAPVFIWLLL).

The protein belongs to the binding-protein-dependent transport system permease family. FecCD subfamily. In terms of assembly, the complex is composed of two ATP-binding proteins (BtuD), two transmembrane proteins (BtuC) and a solute-binding protein (BtuF).

Its subcellular location is the cell inner membrane. Functionally, part of the ABC transporter complex BtuCDF involved in vitamin B12 import. Involved in the translocation of the substrate across the membrane. In Escherichia coli (strain SE11), this protein is Vitamin B12 import system permease protein BtuC.